Consider the following 149-residue polypeptide: SsrA-binding protein (149 aa).

Residues 121–149 (GKKQHDKRAAEKDREWQREKQRLVRSAQH) are disordered. A compositionally biased stretch (basic and acidic residues) spans 127–142 (KRAAEKDREWQREKQR).

This sequence belongs to the SmpB family.

Its subcellular location is the cytoplasm. Its function is as follows. Required for rescue of stalled ribosomes mediated by trans-translation. Binds to transfer-messenger RNA (tmRNA), required for stable association of tmRNA with ribosomes. tmRNA and SmpB together mimic tRNA shape, replacing the anticodon stem-loop with SmpB. tmRNA is encoded by the ssrA gene; the 2 termini fold to resemble tRNA(Ala) and it encodes a 'tag peptide', a short internal open reading frame. During trans-translation Ala-aminoacylated tmRNA acts like a tRNA, entering the A-site of stalled ribosomes, displacing the stalled mRNA. The ribosome then switches to translate the ORF on the tmRNA; the nascent peptide is terminated with the 'tag peptide' encoded by the tmRNA and targeted for degradation. The ribosome is freed to recommence translation, which seems to be the essential function of trans-translation. The sequence is that of SsrA-binding protein from Thiobacillus denitrificans (strain ATCC 25259 / T1).